We begin with the raw amino-acid sequence, 212 residues long: Adenylate kinase (212 aa).

10–15 is a binding site for ATP; that stretch reads GSGKGT. The segment at 30 to 59 is NMP; that stretch reads STGDLMRKEINDETPLGIECARYMNEGRLV. AMP is bound by residues Thr31, Arg36, 57–59, and Gln90; that span reads RLV. Positions 124–161 are LID; sequence GRLICPKCKVSYHIISRKPKLEGICDNDGTELVRRPDD. Residue Arg125 coordinates ATP. Positions 128 and 131 each coordinate Zn(2+). 134 to 135 contacts ATP; the sequence is SY. Zn(2+)-binding residues include Cys148 and Asp151. Residues Arg158 and Arg169 each contribute to the AMP site. Asn198 contacts ATP.

It belongs to the adenylate kinase family. As to quaternary structure, monomer.

It localises to the cytoplasm. The catalysed reaction is AMP + ATP = 2 ADP. It functions in the pathway purine metabolism; AMP biosynthesis via salvage pathway; AMP from ADP: step 1/1. Its function is as follows. Catalyzes the reversible transfer of the terminal phosphate group between ATP and AMP. Plays an important role in cellular energy homeostasis and in adenine nucleotide metabolism. This Mesoplasma florum (strain ATCC 33453 / NBRC 100688 / NCTC 11704 / L1) (Acholeplasma florum) protein is Adenylate kinase.